The sequence spans 467 residues: Gamma-aminobutyric acid receptor subunit gamma-3 (467 aa).

The first 17 residues, 1–17, serve as a signal peptide directing secretion; sequence MAAKLLLLLCLFSGLHA. At 18 to 256 the chain is on the extracellular side; sequence RSRRVEEDDS…FELSRRMGYF (239 aa). Asparagine 110 carries N-linked (GlcNAc...) asparagine glycosylation. Cysteine 171 and cysteine 185 are oxidised to a cystine. A glycan (N-linked (GlcNAc...) asparagine) is linked at asparagine 228. A helical membrane pass occupies residues 257–277; it reads TIQTYIPCILTVVLSWVSFWI. The Cytoplasmic portion of the chain corresponds to 278-283; the sequence is KKDATP. The chain crosses the membrane as a helical span at residues 284–303; that stretch reads ARTTLGITTVLTMTTLSTIA. Over 304-311 the chain is Extracellular; that stretch reads RKSLPRVS. The chain crosses the membrane as a helical span at residues 312–332; that stretch reads YVTAMDLFVTVCFLFVFAALM. Residues 333 to 446 are Cytoplasmic-facing; it reads EYATLNYYSS…DVSELDSYSR (114 aa). A helical membrane pass occupies residues 447–467; that stretch reads VFFPTSFLLFNLVYWVGYLYL.

The protein belongs to the ligand-gated ion channel (TC 1.A.9) family. Gamma-aminobutyric acid receptor (TC 1.A.9.5) subfamily. GABRG3 sub-subfamily. Heteropentamer, formed by a combination of alpha (GABRA1-6), beta (GABRB1-3), gamma (GABRG1-3), delta (GABRD), epsilon (GABRE), rho (GABRR1-3), pi (GABRP) and theta (GABRQ) chains, each subunit exhibiting distinct physiological and pharmacological properties. In terms of processing, may be palmitoylated. As to expression, expressed in brain.

The protein localises to the postsynaptic cell membrane. Its subcellular location is the cell membrane. It carries out the reaction chloride(in) = chloride(out). Allosterically potentiated by alphaxalone. Allosterically inhibited by pregnenolone sulfate. Inhibited by zinc and lanthanum. Functionally, gamma subunit of the heteropentameric ligand-gated chloride channel gated by gamma-aminobutyric acid (GABA), a major inhibitory neurotransmitter in the brain. GABA-gated chloride channels, also named GABA(A) receptors (GABAAR), consist of five subunits arranged around a central pore and contain GABA active binding site(s) located at the alpha and beta subunit interface(s). When activated by GABA, GABAARs selectively allow the flow of chloride across the cell membrane down their electrochemical gradient. This is Gamma-aminobutyric acid receptor subunit gamma-3 from Rattus norvegicus (Rat).